The sequence spans 238 residues: Probable 2-phosphosulfolactate phosphatase (238 aa).

This sequence belongs to the ComB family. Mg(2+) serves as cofactor.

It catalyses the reaction (2R)-O-phospho-3-sulfolactate + H2O = (2R)-3-sulfolactate + phosphate. This is Probable 2-phosphosulfolactate phosphatase from Clostridium botulinum (strain Alaska E43 / Type E3).